The sequence spans 92 residues: Probable Fe(2+)-trafficking protein (92 aa).

Belongs to the Fe(2+)-trafficking protein family.

Functionally, could be a mediator in iron transactions between iron acquisition and iron-requiring processes, such as synthesis and/or repair of Fe-S clusters in biosynthetic enzymes. This Shewanella sp. (strain W3-18-1) protein is Probable Fe(2+)-trafficking protein.